Consider the following 123-residue polypeptide: Large ribosomal subunit protein uL14 (123 aa).

The protein belongs to the universal ribosomal protein uL14 family. As to quaternary structure, part of the 50S ribosomal subunit. Forms a cluster with proteins L3 and L19. In the 70S ribosome, L14 and L19 interact and together make contacts with the 16S rRNA in bridges B5 and B8.

Binds to 23S rRNA. Forms part of two intersubunit bridges in the 70S ribosome. This chain is Large ribosomal subunit protein uL14, found in Vibrio cholerae serotype O1 (strain ATCC 39541 / Classical Ogawa 395 / O395).